Reading from the N-terminus, the 66-residue chain is Jindongenin-1a (66 aa).

An N-terminal signal peptide occupies residues Met-1–Cys-22. Positions Glu-23 to Val-40 are excised as a propeptide. Residues Cys-60 and Cys-66 are joined by a disulfide bond.

In terms of tissue distribution, expressed by the skin glands.

It localises to the secreted. Functionally, displays broad-spectrum antibacterial activity against a range of Gram-positive and Gram-negative bacteria. Also displays antifungal activity against C.albicans ATCC 2002. Has low hemolytic activity, low cytotoxicity and low antioxidant activity. The protein is Jindongenin-1a of Amolops jingdongensis (Chinese torrent frog).